A 392-amino-acid polypeptide reads, in one-letter code: Succinate--CoA ligase [ADP-forming] subunit beta (392 aa).

The 240-residue stretch at K9 to E248 folds into the ATP-grasp domain. Residues K50, G57–G59, E103, M106, and E111 contribute to the ATP site. Residues N203 and D217 each contribute to the Mg(2+) site. Substrate-binding positions include N268 and G325 to V327.

The protein belongs to the succinate/malate CoA ligase beta subunit family. In terms of assembly, heterotetramer of two alpha and two beta subunits. Requires Mg(2+) as cofactor.

It catalyses the reaction succinate + ATP + CoA = succinyl-CoA + ADP + phosphate. It carries out the reaction GTP + succinate + CoA = succinyl-CoA + GDP + phosphate. It participates in carbohydrate metabolism; tricarboxylic acid cycle; succinate from succinyl-CoA (ligase route): step 1/1. Its function is as follows. Succinyl-CoA synthetase functions in the citric acid cycle (TCA), coupling the hydrolysis of succinyl-CoA to the synthesis of either ATP or GTP and thus represents the only step of substrate-level phosphorylation in the TCA. The beta subunit provides nucleotide specificity of the enzyme and binds the substrate succinate, while the binding sites for coenzyme A and phosphate are found in the alpha subunit. The polypeptide is Succinate--CoA ligase [ADP-forming] subunit beta (Chlorobaculum parvum (strain DSM 263 / NCIMB 8327) (Chlorobium vibrioforme subsp. thiosulfatophilum)).